A 749-amino-acid chain; its full sequence is Ribosomal RNA large subunit methyltransferase K/L (749 aa).

Residues 43 to 154 (QGYKVCLWSR…KDKATIYLDL (112 aa)) form the THUMP domain. Residues 386–406 (VEPVAPKKTNKETPEPINPWT) are disordered.

Belongs to the methyltransferase superfamily. RlmKL family.

It is found in the cytoplasm. The catalysed reaction is guanosine(2445) in 23S rRNA + S-adenosyl-L-methionine = N(2)-methylguanosine(2445) in 23S rRNA + S-adenosyl-L-homocysteine + H(+). It catalyses the reaction guanosine(2069) in 23S rRNA + S-adenosyl-L-methionine = N(2)-methylguanosine(2069) in 23S rRNA + S-adenosyl-L-homocysteine + H(+). Specifically methylates the guanine in position 2445 (m2G2445) and the guanine in position 2069 (m7G2069) of 23S rRNA. This chain is Ribosomal RNA large subunit methyltransferase K/L, found in Psychromonas ingrahamii (strain DSM 17664 / CCUG 51855 / 37).